A 140-amino-acid polypeptide reads, in one-letter code: Nucleoside diphosphate kinase (140 aa).

The ATP site is built by lysine 10, phenylalanine 58, arginine 86, threonine 92, arginine 103, and asparagine 113. The Pros-phosphohistidine intermediate role is filled by histidine 116.

It belongs to the NDK family. Homohexamer. It depends on Mg(2+) as a cofactor.

It is found in the cytoplasm. The enzyme catalyses a 2'-deoxyribonucleoside 5'-diphosphate + ATP = a 2'-deoxyribonucleoside 5'-triphosphate + ADP. The catalysed reaction is a ribonucleoside 5'-diphosphate + ATP = a ribonucleoside 5'-triphosphate + ADP. Functionally, major role in the synthesis of nucleoside triphosphates other than ATP. The ATP gamma phosphate is transferred to the NDP beta phosphate via a ping-pong mechanism, using a phosphorylated active-site intermediate. The sequence is that of Nucleoside diphosphate kinase from Methanocaldococcus jannaschii (strain ATCC 43067 / DSM 2661 / JAL-1 / JCM 10045 / NBRC 100440) (Methanococcus jannaschii).